We begin with the raw amino-acid sequence, 439 residues long: Tubulin beta chain (439 aa).

8 residues coordinate GTP: glutamine 11, glutamate 69, serine 138, glycine 142, threonine 143, glycine 144, asparagine 204, and asparagine 226. Mg(2+) is bound at residue glutamate 69.

This sequence belongs to the tubulin family. In terms of assembly, dimer of alpha and beta chains. A typical microtubule is a hollow water-filled tube with an outer diameter of 25 nm and an inner diameter of 15 nM. Alpha-beta heterodimers associate head-to-tail to form protofilaments running lengthwise along the microtubule wall with the beta-tubulin subunit facing the microtubule plus end conferring a structural polarity. Microtubules usually have 13 protofilaments but different protofilament numbers can be found in some organisms and specialized cells. Requires Mg(2+) as cofactor.

The protein resides in the cytoplasm. It localises to the cytoskeleton. In terms of biological role, tubulin is the major constituent of microtubules, a cylinder consisting of laterally associated linear protofilaments composed of alpha- and beta-tubulin heterodimers. Microtubules grow by the addition of GTP-tubulin dimers to the microtubule end, where a stabilizing cap forms. Below the cap, tubulin dimers are in GDP-bound state, owing to GTPase activity of alpha-tubulin. The chain is Tubulin beta chain (TUB2) from Encephalitozoon intestinalis (Microsporidian parasite).